Consider the following 461-residue polypeptide: Glutamate--tRNA ligase (461 aa).

The 'HIGH' region signature appears at 8 to 18; that stretch reads PSPTGYLHIGG. The 'KMSKS' region motif lies at 240–244; that stretch reads KMSKR. Residue Lys-243 coordinates ATP.

This sequence belongs to the class-I aminoacyl-tRNA synthetase family. Glutamate--tRNA ligase type 1 subfamily. In terms of assembly, monomer.

Its subcellular location is the cytoplasm. It carries out the reaction tRNA(Glu) + L-glutamate + ATP = L-glutamyl-tRNA(Glu) + AMP + diphosphate. Its function is as follows. Catalyzes the attachment of glutamate to tRNA(Glu) in a two-step reaction: glutamate is first activated by ATP to form Glu-AMP and then transferred to the acceptor end of tRNA(Glu). The protein is Glutamate--tRNA ligase of Chromobacterium violaceum (strain ATCC 12472 / DSM 30191 / JCM 1249 / CCUG 213 / NBRC 12614 / NCIMB 9131 / NCTC 9757 / MK).